Reading from the N-terminus, the 92-residue chain is Small ribosomal subunit protein bS20 (92 aa).

Positions 1–23 (MANSPSAKKRAIQAEKRRSHNAS) are disordered.

This sequence belongs to the bacterial ribosomal protein bS20 family.

Its function is as follows. Binds directly to 16S ribosomal RNA. The sequence is that of Small ribosomal subunit protein bS20 from Stutzerimonas stutzeri (strain A1501) (Pseudomonas stutzeri).